The following is a 240-amino-acid chain: Phosphoenolpyruvate guanylyltransferase (240 aa).

Phosphoenolpyruvate is bound by residues threonine 161, glycine 178, and serine 181.

The protein belongs to the CofC family.

It catalyses the reaction phosphoenolpyruvate + GTP + H(+) = enolpyruvoyl-2-diphospho-5'-guanosine + diphosphate. The protein operates within cofactor biosynthesis; coenzyme F420 biosynthesis. Its function is as follows. Guanylyltransferase that catalyzes the activation of phosphoenolpyruvate (PEP) as enolpyruvoyl-2-diphospho-5'-guanosine, via the condensation of PEP with GTP. It is involved in the biosynthesis of coenzyme F420, a hydride carrier cofactor. The chain is Phosphoenolpyruvate guanylyltransferase from Rhodococcus opacus (strain B4).